Consider the following 177-residue polypeptide: Eggshell protein (177 aa).

The signal sequence occupies residues 1-18; the sequence is MKQSLTLVFLVAIGYATA. 5 tandem repeats follow at residues 25-41, 42-59, 60-75, 76-91, and 92-112. Positions 25–112 are 5 X approximate tandem repeats; that stretch reads YSGGYGGGCY…GCSGGNCGGG (88 aa). A compositionally biased stretch (gly residues) spans 149 to 166; it reads GSGKGKGGGKGGKGGKGG. The interval 149–177 is disordered; sequence GSGKGKGGGKGGKGGKGGTYKPSHYGGGY.

This is Eggshell protein from Schistosoma mansoni (Blood fluke).